A 247-amino-acid polypeptide reads, in one-letter code: MGLFACCTKYTRLSTDTKMKFPYVALSYINVTLCTYTAMLVGYMVTFNDSSELKYLQYWLLLSFLMSVVLNAPTLWTMLKTTEAHEVIYEMKLFHAMYFSNVLLNYVVFLDNQMGTNFVFVNNLIHCCVLFMIFVELLILLGHTMGTYTDYQYVKSCYMVILFVSVMSVTIVMGLECLKTKLIDNSLMFNAFVCALYIVIAIMWSLKNNLTSYYVSNLQSIQVVPFSYNDPPPPFSNIVMDDIKNKK.

The protein resides in the host cytoplasm. Its subcellular location is the host nucleus. In terms of biological role, accelerates mortality in insect larvae. The polypeptide is Protein AC124 (Lepidoptera (butterflies and moths)).